The sequence spans 363 residues: Peptide chain release factor 2 (363 aa).

Residue Q251 is modified to N5-methylglutamine.

The protein belongs to the prokaryotic/mitochondrial release factor family. Post-translationally, methylated by PrmC. Methylation increases the termination efficiency of RF2.

It localises to the cytoplasm. Peptide chain release factor 2 directs the termination of translation in response to the peptide chain termination codons UGA and UAA. This chain is Peptide chain release factor 2, found in Helicobacter pylori (strain P12).